The chain runs to 2467 residues: Polyprotein P1234 (2467 aa).

One can recognise an Alphavirus-like MT domain in the interval 27–258; sequence ESQQVTPNDH…ESRKLLRSWH (232 aa). Positions 243–262 are nsP1 membrane-binding; the sequence is GSTLYTESRKLLRSWHLPSV. 2 S-palmitoyl cysteine; by host lipidation sites follow: C416 and C418. The 153-residue stretch at 689 to 841 folds into the (+)RNA virus helicase ATP-binding domain; the sequence is DLINPPFHEF…HNICTRVLHK (153 aa). A ribonucleoside 5'-triphosphate is bound at residue 720-727; it reads GVPGSGKS. In terms of domain architecture, (+)RNA virus helicase C-terminal spans 842-990; sequence SISRRCTLPV…LEEWHEEHDG (149 aa). A Peptidase C9 domain is found at 1003–1325; it reads DPFQNKAKVC…QKLSSMYACN (323 aa). Residues 1004 to 1023 are nucleolus localization signal; sequence PFQNKAKVCWAKCLVQVLET. Catalysis depends on C1012, which acts as the For cysteine protease nsP2 activity. The Nuclear export signal motif lies at 1056-1065; it reads TRYYGVDLDS. The For cysteine protease nsP2 activity role is filled by H1081. A Nuclear localization signal motif is present at residues 1180-1184; that stretch reads PHKRV. The 160-residue stretch at 1333–1492 folds into the Macro domain; the sequence is APSYRVRRAD…KIQEAIDRRT (160 aa). D1342, N1356, G1364, G1444, and F1446 together coordinate ADP-D-ribose. Residues C1594, C1596, C1619, and C1637 each contribute to the Zn(2+) site. The tract at residues 1768-1803 is disordered; it reads KVATEPPLEPEAPIPAPRKRRTTSTSPPHNPEDFVP. Over residues 1774–1783 the composition is skewed to pro residues; sequence PLEPEAPIPA. 2 consecutive short sequence motifs (FGDF; binding to host G3BP1) follow at residues 1820–1823 and 1841–1844; these read FGDL and FGDI. The 116-residue stretch at 2221–2336 folds into the RdRp catalytic domain; it reads DAVLETDIAS…HGVRSDPLMA (116 aa).

In terms of assembly, interacts with non-structural protein 3. Interacts with RNA-directed RNA polymerase nsP4. Interacts with protease nsP2. interacts with itself. As to quaternary structure, interacts with mRNA-capping enzyme nsP1. Interacts with host DDX1. Interacts with host DDX3. Interacts (via C-terminus) with host G3BP1; this interaction inhibits the formation of host stress granules on viral mRNAs and the nsp3-G3BP1 complexes bind viral RNAs and probably orchestrate the assembly of viral replication complexes. Interacts (via C-terminus) with host G3BP2; this interaction inhibits the formation of host stress granules on viral mRNAs and the nsp3-G3BP2 complexes bind viral RNAs and probably orchestrate the assembly of viral replication complexes. Interacts with mRNA-capping enzyme nsP1. Interacts with protease nsP2. interacts with itself. In terms of assembly, interacts with RNA-directed RNA polymerase nsP4. Interacts with mRNA-capping enzyme nsP1. Interacts with KPNA1/karyopherin-alpha1; this interaction probably allows the active transport of protease nsP2 into the host nucleus. It depends on Mg(2+) as a cofactor. Mn(2+) is required as a cofactor. In terms of processing, specific enzymatic cleavages in vivo yield mature proteins. The processing of the polyprotein is temporally regulated. In early stages (1.7 hpi), P1234 is first cleaved in trans through its nsP2 protease activity, releasing P123' and nsP4, which associate to form the early replication complex. At the same time, P1234 is also cut at the nsP1/nsP2 site early in infection but with lower efficiency. After replication of the viral minus-strand RNAs (4 hpi), the polyproteins are cut at the nsP1/nsP2 and nsP2/nsP3 sites very efficiently, preventing accumulation of P123' and P1234 and allowing the formation of the late replication complex. NsP3'/nsP4 site is not cleaved anymore and P34 is produced rather than nsP4. Post-translationally, specific enzymatic cleavages in vivo yield mature proteins. The processing of the polyprotein is temporally regulated. In early stages (1.7 hpi), P123 is cleaved at the nsP1/nsP2 site with low efficiency. After replication of the viral minus-strand RNAs (4 hpi), the polyproteins are cut at the nsP1/nsP2 and nsP2/nsP3 sites very efficiently, preventing accumulation of P123 and allowing the formation of the late replication complex. Palmitoylated by host palmitoyltransferases ZDHHC2 and ZDHHC19. In terms of processing, phosphorylated by host on serines and threonines. Post-translationally, ubiquitinated; targets the protein for rapid degradation via the ubiquitin system. Nsp4 is present in extremely low quantities due to low frequency of translation through the amber stop-codon and the degradation by the ubiquitin pathway.

Its subcellular location is the host cytoplasmic vesicle membrane. It localises to the host cell membrane. The protein localises to the host cell projection. It is found in the host filopodium. The protein resides in the host nucleus. Its subcellular location is the host cytoplasm. It carries out the reaction GTP + S-adenosyl-L-methionine = N(7)-methyl-GTP + S-adenosyl-L-homocysteine. The enzyme catalyses N(7)-methyl-GTP + L-histidyl-[protein] = N(tele)-(N(7)-methylguanosine 5'-phospho)-L-histidyl-[protein] + diphosphate. It catalyses the reaction N(tele)-(N(7)-methylguanosine 5'-phospho)-L-histidyl-[protein] + a 5'-end diphospho-(purine-ribonucleoside) in mRNA + H(+) = a 5'-end (N(7)-methyl 5'-triphosphoguanosine)-(purine-ribonucleoside) in mRNA + L-histidyl-[protein]. The catalysed reaction is a 5'-end triphospho-ribonucleoside in mRNA + H2O = a 5'-end diphospho-ribonucleoside in mRNA + phosphate + H(+). It carries out the reaction a ribonucleoside 5'-triphosphate + H2O = a ribonucleoside 5'-diphosphate + phosphate + H(+). The enzyme catalyses ATP + H2O = ADP + phosphate + H(+). It catalyses the reaction RNA(n) + a ribonucleoside 5'-triphosphate = RNA(n+1) + diphosphate. The catalysed reaction is RNA(n) + ATP = RNA(n)-3'-adenine ribonucleotide + diphosphate. It carries out the reaction 4-O-(ADP-D-ribosyl)-L-aspartyl-[protein] + H2O = L-aspartyl-[protein] + ADP-D-ribose + H(+). The enzyme catalyses 5-O-(ADP-D-ribosyl)-L-glutamyl-[protein] + H2O = L-glutamyl-[protein] + ADP-D-ribose + H(+). It catalyses the reaction ADP-alpha-D-ribose 1''-phosphate + H2O = ADP-D-ribose + phosphate. Its function is as follows. Inactive precursor of the viral replicase, which is activated by cleavages carried out by the viral protease nsP2. Functionally, the early replication complex formed by the polyprotein P123 and nsP4 synthesizes minus-strand RNAs. As soon P123 is cleaved into mature proteins, the plus-strand RNAs synthesis begins. In terms of biological role, the early replication complex formed by the polyprotein P123' and nsP4 synthesizes minus-strand RNAs. Polyprotein P123' is a short-lived polyprotein that accumulates during early stage of infection. As soon P123' is cleaved into mature proteins, the plus-strand RNAs synthesis begins. Cytoplasmic capping enzyme that catalyzes two virus-specific reactions: methyltransferase and nsP1 guanylyltransferase. mRNA-capping is necessary since all viral RNAs are synthesized in the cytoplasm, and host capping enzymes are restricted to the nucleus. The enzymatic reaction involves a covalent link between 7-methyl-GMP and nsP1, whereas eukaryotic capping enzymes form a covalent complex only with GMP. nsP1 capping consists in the following reactions: GTP is first methylated into 7-methyl-GMP and then is covalently linked to nsP1 to form the m7GMp-nsP1 complex from which 7-methyl-GMP complex is transferred to the mRNA to create the cap structure. NsP1 is needed for the initiation of the minus-strand RNAs synthesis. Probably serves as a membrane anchor for the replication complex composed of nsP1-nsP4. Palmitoylated nsP1 is remodeling host cell cytoskeleton, and induces filopodium-like structure formation at the surface of the host cell. Its function is as follows. Multifunctional protein whose N-terminus is part of the RNA polymerase complex and displays NTPase, RNA triphosphatase and helicase activities. NTPase and RNA triphosphatase are involved in viral RNA capping and helicase keeps a check on the dsRNA replication intermediates. The C-terminus harbors a protease that specifically cleaves the polyproteins and releases the mature proteins. Required for the shutoff of minus-strand RNAs synthesis. Specifically inhibits the host IFN response by promoting the nuclear export of host STAT1. Also inhibits host transcription by inducing rapid proteasome-dependent degradation of POLR2A, a catalytic subunit of the RNAPII complex. The resulting inhibition of cellular protein synthesis serves to ensure maximal viral gene expression and to evade host immune response. Functionally, seems to be essential for minus-strand RNAs and subgenomic 26S mRNAs synthesis. Displays mono-ADP-ribosylhydrolase activity. ADP-ribosylation is a post-translational modification that controls various processes of the host cell and the virus probably needs to revert it for optimal viral replication. Binds proteins of FXR family and sequesters them into the viral RNA replication complexes thereby inhibiting the formation of host stress granules on viral mRNAs. The nsp3'-FXR complexes bind viral RNAs and probably orchestrate the assembly of viral replication complexes, thanks to the ability of FXR family members to self-assemble and bind DNA. In terms of biological role, seems to be essential for minus-strand RNAs and subgenomic 26S mRNAs synthesis. Displays mono-ADP-ribosylhydrolase activity. ADP-ribosylation is a post-translantional modification that controls various processes of the host cell and the virus probably needs to revert it for optimal viral replication. Binds proteins of G3BP family and sequesters them into the viral RNA replication complexes thereby inhibiting the formation of host stress granules on viral mRNAs. The nsp3-G3BP complexes bind viral RNAs and probably orchestrate the assembly of viral replication complexes, thanks to the ability of G3BP family members to self-assemble and bind DNA. RNA dependent RNA polymerase. Replicates genomic and antigenomic RNA by recognizing replications specific signals. The early replication complex formed by the polyprotein P123 and nsP4 synthesizes minus-strand RNAs. The late replication complex composed of fully processed nsP1-nsP4 is responsible for the production of genomic and subgenomic plus-strand RNAs. The core catalytic domain of nsP4 also possesses terminal adenylyltransferase (TATase) activity that is probably involved in maintenance and repair of the poly(A) tail, an element required for replication of the viral genome. This chain is Polyprotein P1234, found in Getah virus (GETV).